The sequence spans 101 residues: Urease subunit beta (101 aa).

The protein belongs to the urease beta subunit family. Heterotrimer of UreA (gamma), UreB (beta) and UreC (alpha) subunits. Three heterotrimers associate to form the active enzyme.

It is found in the cytoplasm. The enzyme catalyses urea + 2 H2O + H(+) = hydrogencarbonate + 2 NH4(+). The protein operates within nitrogen metabolism; urea degradation; CO(2) and NH(3) from urea (urease route): step 1/1. This is Urease subunit beta from Stutzerimonas stutzeri (strain A1501) (Pseudomonas stutzeri).